The following is a 340-amino-acid chain: Short-chain dehydrogenase/reductase ffsI (340 aa).

The NADP(+) site is built by leucine 46, arginine 71, aspartate 96, asparagine 123, tyrosine 211, and lysine 215. Tyrosine 211 serves as the catalytic Proton acceptor. Residue lysine 215 is the Lowers pKa of active site Tyr of the active site.

The protein belongs to the short-chain dehydrogenases/reductases (SDR) family.

Its pathway is mycotoxin biosynthesis. In terms of biological role, short-chain dehydrogenase/reductase; part of the gene cluster that mediates the biosynthesis of the cytotoxic leucine-containing cytochalasans, including aspochalasin C, aspochalasin E, TMC-169, flavichalasine F, aspergillin PZ, aspochalasin M and flavichalasine G. The first step in the pathway is catalyzed by the hybrid PKS-NRPS ffsA that utilizes 8 units of malonyl-CoA to iteratively assemble the octaketide chain before addition of L-leucine by the C-terminal NRPS modules. Because ffsA lacks a designated enoylreductase (ER) domain, the required activity is provided the enoyl reductase fssC. The methyltransferase (MT) domain of ffsA catalyzes the alpha-methylation at C10 and C14 using S-adenosyl-L-methionine as the methyl-donating cosubstrate. Reduction by the hydrolyase ffsE, followed by dehydration and intra-molecular Diels-Alder cyclization by the Diels-Alderase ffsF then yield the required isoindolone-fused macrocycle. A number of oxidative steps catalyzed by the tailoring cytochrome P450 monooxygenase ffsD, the FAD-linked oxidoreductase ffsJ and the short-chain dehydrogenase/reductase ffsI, are further required to afford the final products. The sequence is that of Short-chain dehydrogenase/reductase ffsI from Aspergillus flavipes.